The primary structure comprises 160 residues: Transcriptional regulator MraZ (160 aa).

SpoVT-AbrB domains lie at 5–50 (NFET…DGGY) and 93–136 (AVEC…SQAE).

This sequence belongs to the MraZ family. As to quaternary structure, forms oligomers.

Its subcellular location is the cytoplasm. The protein localises to the nucleoid. The polypeptide is Transcriptional regulator MraZ (Geotalea daltonii (strain DSM 22248 / JCM 15807 / FRC-32) (Geobacter daltonii)).